The following is a 439-amino-acid chain: Ribosomal protein uS12 methylthiotransferase RimO (439 aa).

One can recognise an MTTase N-terminal domain in the interval 7–119 (KQLCLISLGC…IDIMIAKKQN (113 aa)). Positions 16, 50, 82, 151, 155, and 158 each coordinate [4Fe-4S] cluster. The Radical SAM core domain occupies 137–368 (TGSSVHAYVK…ALKHQNHSFK (232 aa)).

The protein belongs to the methylthiotransferase family. RimO subfamily. The cofactor is [4Fe-4S] cluster.

The protein localises to the cytoplasm. The catalysed reaction is L-aspartate(89)-[ribosomal protein uS12]-hydrogen + (sulfur carrier)-SH + AH2 + 2 S-adenosyl-L-methionine = 3-methylsulfanyl-L-aspartate(89)-[ribosomal protein uS12]-hydrogen + (sulfur carrier)-H + 5'-deoxyadenosine + L-methionine + A + S-adenosyl-L-homocysteine + 2 H(+). Functionally, catalyzes the methylthiolation of an aspartic acid residue of ribosomal protein uS12. This Helicobacter pylori (strain P12) protein is Ribosomal protein uS12 methylthiotransferase RimO.